The sequence spans 168 residues: Photosystem I assembly protein Ycf3 (168 aa).

TPR repeat units follow at residues 35–68 (AFTYYRDGMSAQSEGNYAEALQNYYEATRPEIDP), 72–105 (SYILYNIGLIHTSNGEHTKALEYYFRALERNPFL), and 120–153 (GEQAILQGDSEIAEAWSDQAAEYWKQAIALTPGN).

It belongs to the Ycf3 family.

The protein localises to the plastid. It localises to the chloroplast thylakoid membrane. Functionally, essential for the assembly of the photosystem I (PSI) complex. May act as a chaperone-like factor to guide the assembly of the PSI subunits. The chain is Photosystem I assembly protein Ycf3 from Lemna minor (Common duckweed).